The sequence spans 458 residues: Exodeoxyribonuclease 7 large subunit (458 aa).

This sequence belongs to the XseA family. As to quaternary structure, heterooligomer composed of large and small subunits.

Its subcellular location is the cytoplasm. It catalyses the reaction Exonucleolytic cleavage in either 5'- to 3'- or 3'- to 5'-direction to yield nucleoside 5'-phosphates.. Functionally, bidirectionally degrades single-stranded DNA into large acid-insoluble oligonucleotides, which are then degraded further into small acid-soluble oligonucleotides. This chain is Exodeoxyribonuclease 7 large subunit, found in Yersinia enterocolitica serotype O:8 / biotype 1B (strain NCTC 13174 / 8081).